A 695-amino-acid chain; its full sequence is Pre-mRNA-splicing factor clf-1 (695 aa).

HAT repeat units lie at residues 52-84 (EYQG…WELE), 86-118 (KEFA…AEIK), 120-152 (RNIN…VMEM), 154-185 (GDIP…LEKR), 187-218 (GEFD…FEEE), 220-259 (GTSD…YEAR), 261-295 (REYE…FEKQ), 305-337 (VILT…LEES), 339-373 (GDVD…LFLF), 383-419 (KDIG…FEIR), 421-452 (GQLT…LEQK), 454-486 (YEFE…LERG), 488-522 (DDLE…FEEE), 524-555 (GEYE…FEIN), 578-616 (EAKA…FEKT), and 621-654 (EDIE…YIFP).

The protein belongs to the crooked-neck family. As to quaternary structure, associated with the spliceosome.

It is found in the nucleus. Its function is as follows. Involved in pre-mRNA splicing and cell cycle progression. Required for the spliceosome assembly and initiation of the DNA replication. This chain is Pre-mRNA-splicing factor clf-1 (clf-1), found in Neurospora crassa (strain ATCC 24698 / 74-OR23-1A / CBS 708.71 / DSM 1257 / FGSC 987).